Reading from the N-terminus, the 212-residue chain is Adenylate kinase (212 aa).

Position 10–15 (10–15 (GAGKGT)) interacts with ATP. Positions 30 to 59 (STGDMFRAAMANQTEMGRLAKSYIDKGELV) are NMP. Residues Thr31, Arg36, 57 to 59 (ELV), 86 to 89 (GYPR), and Gln93 each bind AMP. The LID stretch occupies residues 127–159 (GRIINRKTGETFHKVFNPPVDYKEEDYYQREDD). Residues Arg128 and 137-138 (TF) each bind ATP. Arg156 and Arg167 together coordinate AMP. Gln195 provides a ligand contact to ATP.

This sequence belongs to the adenylate kinase family. Monomer.

It is found in the cytoplasm. The catalysed reaction is AMP + ATP = 2 ADP. It participates in purine metabolism; AMP biosynthesis via salvage pathway; AMP from ADP: step 1/1. Its function is as follows. Catalyzes the reversible transfer of the terminal phosphate group between ATP and AMP. Plays an important role in cellular energy homeostasis and in adenine nucleotide metabolism. This chain is Adenylate kinase, found in Streptococcus pyogenes serotype M1.